Here is a 256-residue protein sequence, read N- to C-terminus: Trans-aconitate 2-methyltransferase (256 aa).

It belongs to the methyltransferase superfamily. Tam family.

It localises to the cytoplasm. The enzyme catalyses trans-aconitate + S-adenosyl-L-methionine = (E)-3-(methoxycarbonyl)pent-2-enedioate + S-adenosyl-L-homocysteine. Functionally, catalyzes the S-adenosylmethionine monomethyl esterification of trans-aconitate. This chain is Trans-aconitate 2-methyltransferase, found in Rhodopseudomonas palustris (strain BisB18).